An 886-amino-acid chain; its full sequence is Putative respiratory burst oxidase homolog protein H (886 aa).

Disordered regions lie at residues 1 to 46 (MKSN…KKNA) and 64 to 103 (WRKSGNLGSPSTRKSGNLGPPTNAVPKKTGPQRVERTTSS). Residues 1–316 (MKSNTPTEDS…AELMHENWKK (316 aa)) lie on the Cytoplasmic side of the membrane. Over residues 64-78 (WRKSGNLGSPSTRKS) the composition is skewed to polar residues. EF-hand-like regions lie at residues 137–145 (SVDGKLPKE) and 171–183 (RQIETENGIDKEQ). EF-hand domains are found at residues 195 to 230 (DLDCRLQIFFDMCDKNGDGKLTEEEVKEVIVLSASA) and 239 to 274 (NAAAYASLIMEELDPDHKGYIEMWQLEILLTGMVTN). Ca(2+) is bound by residues D208, N210, D212, K214, and E219. A Phosphoserine modification is found at S283. Residues 317-337 (LWVLALWAIINVYLFMWKYEE) traverse the membrane as a helical segment. Topologically, residues 338–404 (FMRNPLYNIT…INFHKVIAYM (67 aa)) are extracellular. One can recognise a Ferric oxidoreductase domain in the interval 355–512 (KGAAETLKLN…LLVLAYILLI (158 aa)). A helical membrane pass occupies residues 405–421 (IAFQALLHTALHIFCNY). The Cytoplasmic segment spans residues 422 to 456 (PRLSSCSYDVFLTYAGAALGNTQPSYLGLMLTSVS). The helical transmembrane segment at 457-477 (ITGVLMIFFMGFSFTLAMHYF) threads the bilayer. The Extracellular segment spans residues 478–499 (RRNIVKLPKPFNVLAGFNAFWY). The chain crosses the membrane as a helical span at residues 500–520 (AHHLLVLAYILLIIHGYYLII). Topologically, residues 521–528 (EKPWYQKT) are cytoplasmic. The helical transmembrane segment at 529–546 (TWMYLAVPMLFYASERLF) threads the bilayer. Over 547–688 (SRLLQEHSHR…PYGAPAQNYQ (142 aa)) the chain is Extracellular. The FAD-binding FR-type domain occupies 552–686 (EHSHRVNVIK…KGPYGAPAQN (135 aa)). The chain crosses the membrane as a helical span at residues 689–709 (KFDILLLVGLGIGATPFISIL). Over 710–886 (KDMLNHLKPG…TRFTFHKENF (177 aa)) the chain is Cytoplasmic.

Belongs to the RBOH (TC 5.B.1.3) family. In terms of assembly, monomer and homodimer.

It localises to the membrane. In terms of biological role, calcium-dependent NADPH oxidase that generates superoxide. This Arabidopsis thaliana (Mouse-ear cress) protein is Putative respiratory burst oxidase homolog protein H (RBOHH).